The primary structure comprises 287 residues: Large ribosomal subunit protein uL2 (287 aa).

Residues 221 to 287 (RGSVMNPCDH…SKRSRGGRDS (67 aa)) form a disordered region. The span at 258–287 (KTRKRNKPSNKFVLRKRRKTSKRSRGGRDS) shows a compositional bias: basic residues.

It belongs to the universal ribosomal protein uL2 family. Part of the 50S ribosomal subunit. Forms a bridge to the 30S subunit in the 70S ribosome.

In terms of biological role, one of the primary rRNA binding proteins. Required for association of the 30S and 50S subunits to form the 70S ribosome, for tRNA binding and peptide bond formation. It has been suggested to have peptidyltransferase activity; this is somewhat controversial. Makes several contacts with the 16S rRNA in the 70S ribosome. This Synechococcus sp. (strain WH7803) protein is Large ribosomal subunit protein uL2.